Consider the following 500-residue polypeptide: Pyruvate kinase 1 (500 aa).

Serine 2 bears the N-acetylserine mark. Phosphoserine occurs at positions 9 and 16. Phosphothreonine is present on threonine 31. Arginine 49 lines the substrate pocket. 2 residues coordinate K(+): asparagine 51 and serine 53. 51–54 (NFSH) serves as a coordination point for ATP. At serine 70 the chain carries Phosphoserine. K(+) is bound by residues aspartate 84 and threonine 85. Arginine 91 provides a ligand contact to ATP. Glycyl lysine isopeptide (Lys-Gly) (interchain with G-Cter in URM1) cross-links involve residues lysine 119, lysine 124, lysine 161, lysine 164, and lysine 166. An ATP-binding site is contributed by lysine 177. Threonine 184 is subject to Phosphothreonine. Residue lysine 204 forms a Glycyl lysine isopeptide (Lys-Gly) (interchain with G-Cter in ubiquitin) linkage. Serine 213 carries the phosphoserine modification. Lysine 240 contacts substrate. Glutamate 242 is a Mn(2+) binding site. Lysine 255 participates in a covalent cross-link: Glycyl lysine isopeptide (Lys-Gly) (interchain with G-Cter in ubiquitin). The substrate site is built by glycine 265 and aspartate 266. Mn(2+) is bound at residue aspartate 266. A Glycyl lysine isopeptide (Lys-Gly) (interchain with G-Cter in URM1) cross-link involves residue lysine 292. Position 298 (threonine 298) interacts with substrate. Phosphoserine is present on serine 316. A Glycyl lysine isopeptide (Lys-Gly) (interchain with G-Cter in URM1) cross-link involves residue lysine 394. Residue 402 to 407 (STSGTT) coordinates beta-D-fructose 1,6-bisphosphate. A Cysteine persulfide modification is found at cysteine 418. A Glycyl lysine isopeptide (Lys-Gly) (interchain with G-Cter in ubiquitin); alternate cross-link involves residue lysine 446. Lysine 446 is covalently cross-linked (Glycyl lysine isopeptide (Lys-Gly) (interchain with G-Cter in URM1); alternate). Serine 450 carries the post-translational modification Phosphoserine. Tryptophan 452 and arginine 459 together coordinate beta-D-fructose 1,6-bisphosphate. Threonine 478 carries the post-translational modification Phosphothreonine. Beta-D-fructose 1,6-bisphosphate is bound at residue glycine 484.

The protein belongs to the pyruvate kinase family. As to quaternary structure, homotetramer. Requires Mg(2+) as cofactor. The cofactor is K(+). In terms of processing, conjugated to URM1, a ubiquitin-like protein, in response to oxidative stresses. The attachment of URM1 to lysine residues exclusively depends on the presence of a peroxidatic cysteine in the target protein, with low specificity for the particular residue, motif, or structural context at which urmylation can occur. The URM1-conjugation reaction is mechanistically and directly coupled to the process of cysteine persulfidation, transfering the sulfur atom of the URM1 thiocarboxyl group to redox-active cysteine residues in the target protein if it is exposed to oxidative conditions. Post-translationally, persulfidated on specific redox-active cysteine residues. Persulfidation (also called protein S-sulfhydration) may provide a molecular mechanism that enables cells to protect vulnerable cysteine residues from reactive oxygen species (ROS) under stress conditions.

It carries out the reaction pyruvate + ATP = phosphoenolpyruvate + ADP + H(+). It participates in carbohydrate degradation; glycolysis; pyruvate from D-glyceraldehyde 3-phosphate: step 5/5. Its activity is regulated as follows. The activity is regulated by glucose levels. Activated by fructose-1,6-bisphosphate. This chain is Pyruvate kinase 1 (CDC19), found in Saccharomyces cerevisiae (strain ATCC 204508 / S288c) (Baker's yeast).